A 185-amino-acid polypeptide reads, in one-letter code: UPF0200 protein TK1334 (185 aa).

7-14 (GMPGSGKS) contacts ATP.

Belongs to the UPF0200 family.

In Thermococcus kodakarensis (strain ATCC BAA-918 / JCM 12380 / KOD1) (Pyrococcus kodakaraensis (strain KOD1)), this protein is UPF0200 protein TK1334.